Here is a 387-residue protein sequence, read N- to C-terminus: Alkanesulfonate monooxygenase (387 aa).

Belongs to the SsuD family.

It catalyses the reaction an alkanesulfonate + FMNH2 + O2 = an aldehyde + FMN + sulfite + H2O + 2 H(+). Its function is as follows. Catalyzes the desulfonation of aliphatic sulfonates. The polypeptide is Alkanesulfonate monooxygenase (Cupriavidus pinatubonensis (strain JMP 134 / LMG 1197) (Cupriavidus necator (strain JMP 134))).